The sequence spans 491 residues: Cadherin-3 (491 aa).

Cadherin domains follow at residues 1 to 102 (ENTV…PPVF), 103 to 208 (VPPS…DHGP), and 209 to 314 (VPEP…DPWT). At 1–316 (ENTVSHEVQR…VTCRDPWTWG (316 aa)) the chain is on the extracellular side. A glycan (N-linked (GlcNAc...) asparagine) is linked at Asn-228. A helical transmembrane segment spans residues 317–339 (FLLPILGAALALLLLLLVLLFLV). The Cytoplasmic portion of the chain corresponds to 340-491 (RKKRKIKEPL…ADMYGGGQDD (152 aa)).

In terms of assembly, interacts with CDCP1 and CTNNB1.

The protein resides in the cell membrane. Its function is as follows. Cadherins are calcium-dependent cell adhesion proteins. They preferentially interact with themselves in a homophilic manner in connecting cells; cadherins may thus contribute to the sorting of heterogeneous cell types. In Bos taurus (Bovine), this protein is Cadherin-3 (CDH3).